A 695-amino-acid polypeptide reads, in one-letter code: MAETKIIYHMDEEETPYLVKLPVAPERVTLADFKNVLSNRPVHAYKFFFKSMDQDFGVVKEEIFDDNAKLPCFNGRVVSWLVLAEGAHSDAGSQGTDSHTDLPPPLERTGGIGDSRPPSFHPNVASSRDGMDNETGTESMVSHRRERARRRNRDEAARTNGHPRGDRRRELGLPPDSASTVLSSELESSSFIDSDEEDNTSRLSSSTEQSTSSRLIRKHKCRRRKQRLRQTDRASSFSSITDSTMSLNIITVTLNMERHHFLGISIVGQSNDRGDGGIYIGSIMKGGAVAADGRIEPGDMLLQVNDVNFENMSNDDAVRVLREIVSQTGPISLTVAKCWDPTPRSYFTIPRADPVRPIDPAAWLSHTAALTGALPRYGTSPCSSAITRTSSSSLTSSVPGAPQLEEAPLTVKSDMSAIVRVMQLPDSGLEIRDRMWLKITIANAVIGADVVDWLYTHVEGFKERREARKYASSMLKHGFLRHTVNKITFSEQCYYVFGDLCSNLASLNLNSGSSGASDQDTLAPLPHPSVPWPLGQGYPYQYPGPPPCFPPAYQDPGFSYGSGSAGSQQSEGSKSSGSTRSSHRTPGREERRATGAGGSGSESDHTVPSGSGSTGWWERPVSQLSRGSSPRSQASAVAPGLPPLHPLTKAYAVVGGPPGGPPVRELAAVPPELTGSRQSFQKAMGNPCEFFVDIM.

In terms of domain architecture, DIX spans 1 to 85; the sequence is MAETKIIYHM…RVVSWLVLAE (85 aa). The tract at residues 89–236 is disordered; it reads SDAGSQGTDS…RLRQTDRASS (148 aa). Residues 142–151 are compositionally biased toward basic residues; it reads SHRRERARRR. The segment covering 152-171 has biased composition (basic and acidic residues); sequence NRDEAARTNGHPRGDRRREL. Residues 177 to 192 are compositionally biased toward low complexity; the sequence is SASTVLSSELESSSFI. Ser194 is modified (phosphoserine). Positions 201 to 214 are enriched in low complexity; that stretch reads SRLSSSTEQSTSSR. The segment covering 215 to 228 has biased composition (basic residues); that stretch reads LIRKHKCRRRKQRL. In terms of domain architecture, PDZ spans 251 to 323; that stretch reads TVTLNMERHH…NDDAVRVLRE (73 aa). One can recognise a DEP domain in the interval 425-499; sequence PDSGLEIRDR…SEQCYYVFGD (75 aa). Over residues 551-580 the composition is skewed to low complexity; it reads PAYQDPGFSYGSGSAGSQQSEGSKSSGSTR. The interval 551–641 is disordered; sequence PAYQDPGFSY…SQASAVAPGL (91 aa). The span at 622–635 shows a compositional bias: polar residues; sequence SQLSRGSSPRSQAS.

It belongs to the DSH family. In terms of assembly, interacts with BRD7 and INVS. Interacts (via PDZ domain) with the VANGL1 and VANGL2 (via C-terminus). Interacts (via PDZ domain) with NXN. Interacts with CXXC4. Interacts with ARRB1; the interaction is enhanced by phosphorylation of DVL1. Interacts with CYLD. Interacts (via PDZ domain) with RYK. Self-associates (via DIX domain) and forms higher homooligomers. Interacts (via PDZ domain) with DACT1 and FZD7, where DACT1 and FZD7 compete for the same binding site. Interacts (via DEP domain) with MUSK; the interaction is direct and mediates the formation a DVL1, MUSK and PAK1 ternary complex involved in AChR clustering. Interacts (via PDZ domain) with TMEM88. Interacts with DCDC2. Interacts with FOXK2. Interacts with PKD1 (via extracellular domain). Interacts (via PDZ domain) with CCDC88C/DAPLE; competes with CCDC88C for binding to frizzled receptor FZD7 and dissociates from CCDC88C following initiation of non-canonical Wnt signaling when CCDC88C displaces DVL1 from ligand-activated FZD7. Post-translationally, ubiquitinated; undergoes both 'Lys-48'-linked ubiquitination, leading to its subsequent degradation by the ubiquitin-proteasome pathway, and 'Lys-63'-linked ubiquitination. The interaction with INVS is required for ubiquitination. Deubiquitinated by CYLD, which acts on 'Lys-63'-linked ubiquitin chains.

Its subcellular location is the cell membrane. It is found in the cytoplasm. It localises to the cytosol. The protein localises to the cytoplasmic vesicle. Participates in Wnt signaling by binding to the cytoplasmic C-terminus of frizzled family members and transducing the Wnt signal to down-stream effectors. Plays a role both in canonical and non-canonical Wnt signaling. Plays a role in the signal transduction pathways mediated by multiple Wnt genes. Required for LEF1 activation upon WNT1 and WNT3A signaling. DVL1 and PAK1 form a ternary complex with MUSK which is important for MUSK-dependent regulation of AChR clustering during the formation of the neuromuscular junction (NMJ). The sequence is that of Segment polarity protein dishevelled homolog DVL-1 (Dvl1) from Rattus norvegicus (Rat).